Here is an 856-residue protein sequence, read N- to C-terminus: Phosphoenolpyruvate synthase (856 aa).

His433 serves as the catalytic Tele-phosphohistidine intermediate. Residues Arg523, Arg636, Glu738, Gly759, Ser760, Asn761, and Asp762 each coordinate substrate. Residue Glu738 participates in Mg(2+) binding. Asp762 lines the Mg(2+) pocket. Cys809 (proton donor) is an active-site residue.

The protein belongs to the PEP-utilizing enzyme family. The cofactor is Mg(2+).

It catalyses the reaction pyruvate + ATP + H2O = phosphoenolpyruvate + AMP + phosphate + 2 H(+). Its pathway is carbohydrate biosynthesis; gluconeogenesis. Its function is as follows. Catalyzes the phosphorylation of pyruvate to phosphoenolpyruvate. The protein is Phosphoenolpyruvate synthase (ppsA) of Aquifex aeolicus (strain VF5).